Consider the following 223-residue polypeptide: Cutinase (223 aa).

The signal sequence occupies residues M1–A19. C46 and C124 are disulfide-bonded. Catalysis depends on S135, which acts as the Nucleophile. An intrachain disulfide couples C185 to C192. D189 is an active-site residue. H202 serves as the catalytic Proton donor/acceptor.

This sequence belongs to the cutinase family. Post-translationally, the 2 disulfide bonds play a critical role in holding the catalytic residues in juxta-position; reduction of the disulfide bridges results in the complete inactivation of the enzyme.

Its subcellular location is the secreted. It catalyses the reaction cutin + H2O = cutin monomers.. In terms of biological role, catalyzes the hydrolysis of complex carboxylic polyesters found in the cell wall of plants. Degrades cutin, a macromolecule that forms the structure of the plant cuticle. Allows pathogenic fungi to penetrate through the cuticular barrier into the host plant during the initial stage of fungal infection. This Didymella rabiei (Chickpea ascochyta blight fungus) protein is Cutinase (CUT).